Here is a 142-residue protein sequence, read N- to C-terminus: HTH-type transcriptional regulator MntR (142 aa).

Residues 1–63 enclose the HTH dtxR-type domain; that stretch reads MPTPSMEDYI…YEKYRGLVLT (63 aa). Residues D8, E11, H77, E99, E102, and H103 each contribute to the Mn(2+) site.

The protein belongs to the DtxR/MntR family. As to quaternary structure, homodimer.

It localises to the cytoplasm. DNA binding is strongly activated by Mn(2+). Central regulator of manganese homeostasis. This Bacillus cereus (strain AH820) protein is HTH-type transcriptional regulator MntR.